We begin with the raw amino-acid sequence, 276 residues long: Elongation factor Ts (276 aa).

The interval 76-79 is involved in Mg(2+) ion dislocation from EF-Tu; the sequence is TDFV.

Belongs to the EF-Ts family.

It is found in the cytoplasm. Associates with the EF-Tu.GDP complex and induces the exchange of GDP to GTP. It remains bound to the aminoacyl-tRNA.EF-Tu.GTP complex up to the GTP hydrolysis stage on the ribosome. The polypeptide is Elongation factor Ts (Mycobacterium leprae (strain Br4923)).